Consider the following 229-residue polypeptide: DNA repair protein RecO (229 aa).

The protein belongs to the RecO family.

Functionally, involved in DNA repair and RecF pathway recombination. The protein is DNA repair protein RecO of Pseudomonas fluorescens (strain ATCC BAA-477 / NRRL B-23932 / Pf-5).